The primary structure comprises 665 residues: Macrolide export ATP-binding/permease protein MacB (665 aa).

Residues 17–255 (MQVKGLIREF…AAQPASIIDK (239 aa)) form the ABC transporter domain. 53-60 (GQSGSGKS) is an ATP binding site. 4 helical membrane-spanning segments follow: residues 287–307 (LLTM…VGLG), 544–564 (IAII…LVSV), 588–608 (FLIE…GLAF), and 630–650 (SIIA…FLPA).

The protein belongs to the ABC transporter superfamily. Macrolide exporter (TC 3.A.1.122) family. Homodimer. Part of the tripartite efflux system MacAB-TolC, which is composed of an inner membrane transporter, MacB, a periplasmic membrane fusion protein, MacA, and an outer membrane component, TolC. The complex forms a large protein conduit and can translocate molecules across both the inner and outer membranes. Interacts with MacA.

Its subcellular location is the cell inner membrane. Part of the tripartite efflux system MacAB-TolC. MacB is a non-canonical ABC transporter that contains transmembrane domains (TMD), which form a pore in the inner membrane, and an ATP-binding domain (NBD), which is responsible for energy generation. Confers resistance against macrolides. This chain is Macrolide export ATP-binding/permease protein MacB, found in Psychrobacter cryohalolentis (strain ATCC BAA-1226 / DSM 17306 / VKM B-2378 / K5).